Reading from the N-terminus, the 430-residue chain is Probable carboxypeptidase AO090003000058 (430 aa).

Positions 1-16 (MKSIYSLVLCTALTAA) are cleaved as a signal peptide. N84 is a glycosylation site (N-linked (GlcNAc...) asparagine). Residue D156 coordinates Zn(2+). The Proton acceptor role is filled by E188. Residue E189 coordinates Zn(2+). The N-linked (GlcNAc...) asparagine glycan is linked to N285.

The protein belongs to the peptidase M20A family. It depends on Zn(2+) as a cofactor.

Its subcellular location is the secreted. In Aspergillus oryzae (strain ATCC 42149 / RIB 40) (Yellow koji mold), this protein is Probable carboxypeptidase AO090003000058.